The sequence spans 318 residues: Biotin synthase (318 aa).

Residues 44–270 (LCGDAVNLCS…INPTANIRLA (227 aa)) form the Radical SAM core domain. Residues Cys62, Cys66, and Cys69 each contribute to the [4Fe-4S] cluster site. [2Fe-2S] cluster-binding residues include Ser106, Cys138, Cys198, and Arg268.

This sequence belongs to the radical SAM superfamily. Biotin synthase family. Homodimer. [4Fe-4S] cluster is required as a cofactor. The cofactor is [2Fe-2S] cluster.

The enzyme catalyses (4R,5S)-dethiobiotin + (sulfur carrier)-SH + 2 reduced [2Fe-2S]-[ferredoxin] + 2 S-adenosyl-L-methionine = (sulfur carrier)-H + biotin + 2 5'-deoxyadenosine + 2 L-methionine + 2 oxidized [2Fe-2S]-[ferredoxin]. It functions in the pathway cofactor biosynthesis; biotin biosynthesis; biotin from 7,8-diaminononanoate: step 2/2. In terms of biological role, catalyzes the conversion of dethiobiotin (DTB) to biotin by the insertion of a sulfur atom into dethiobiotin via a radical-based mechanism. In Alkaliphilus metalliredigens (strain QYMF), this protein is Biotin synthase.